The sequence spans 298 residues: Phosphatidylglycerol--prolipoprotein diacylglyceryl transferase (298 aa).

3 helical membrane-spanning segments follow: residues 17–37 (LAVRWYGLMYLVGFIAAIVVG), 59–79 (MMFYGVLGTVLGGRLGYVLFY), and 97–117 (GGMSFHGGFLGVTLAMMLFAW). Arg142 is an a 1,2-diacyl-sn-glycero-3-phospho-(1'-sn-glycerol) binding site. The next 2 membrane-spanning stretches (helical) occupy residues 230–250 (MGAISALFLIGYGLARFTVEF) and 257–277 (FLGLLALGLSMGQWLSLPMIV).

Belongs to the Lgt family.

It localises to the cell inner membrane. It catalyses the reaction L-cysteinyl-[prolipoprotein] + a 1,2-diacyl-sn-glycero-3-phospho-(1'-sn-glycerol) = an S-1,2-diacyl-sn-glyceryl-L-cysteinyl-[prolipoprotein] + sn-glycerol 1-phosphate + H(+). It functions in the pathway protein modification; lipoprotein biosynthesis (diacylglyceryl transfer). Its function is as follows. Catalyzes the transfer of the diacylglyceryl group from phosphatidylglycerol to the sulfhydryl group of the N-terminal cysteine of a prolipoprotein, the first step in the formation of mature lipoproteins. The chain is Phosphatidylglycerol--prolipoprotein diacylglyceryl transferase from Burkholderia cenocepacia (strain ATCC BAA-245 / DSM 16553 / LMG 16656 / NCTC 13227 / J2315 / CF5610) (Burkholderia cepacia (strain J2315)).